The sequence spans 1378 residues: Macrophage-stimulating protein receptor (1378 aa).

The first 23 residues, 1–23 (MGLPLPLLQSSLLLMLLLRLSAA), serve as a signal peptide directing secretion. The Extracellular portion of the chain corresponds to 25 to 960 (TNLNWQCPRI…RSSPGRASQR (936 aa)). The 492-residue stretch at 33 to 524 (RIPYAASRDF…SGDQVFKVPI (492 aa)) folds into the Sema domain. N-linked (GlcNAc...) asparagine glycosylation is present at Asn91. 7 cysteine pairs are disulfide-bonded: Cys102–Cys105, Cys108–Cys163, Cys136–Cys144, Cys175–Cys178, Cys301–Cys368, Cys386–Cys409, and Cys387–Cys424. Asn391, Asn460, and Asn490 each carry an N-linked (GlcNAc...) asparagine glycan. Cystine bridges form between Cys529–Cys547, Cys535–Cys569, Cys538–Cys554, and Cys550–Cys560. IPT/TIG domains follow at residues 571 to 673 (PEIS…FRVE), 686 to 769 (PVLT…FHYK), and 772 to 864 (PIVL…FRFL). 4 N-linked (GlcNAc...) asparagine glycosylation sites follow: Asn656, Asn722, Asn845, and Asn901. A helical membrane pass occupies residues 961–981 (ILLIALLVLILLVAVLAVALI). Topologically, residues 982-1378 (FNSRRRKKQL…RPLSEPPLPT (397 aa)) are cytoplasmic. Residues 1002-1026 (SDINDTASGAPNHEESSESRDGTSV) are disordered. The segment covering 1013 to 1022 (NHEESSESRD) has biased composition (basic and acidic residues). Residues 1059 to 1322 (IHTDQVIGKG…ALVLEVKQVV (264 aa)) form the Protein kinase domain. ATP contacts are provided by residues 1065–1073 (IGKGHFGVV), Lys1091, and 1138–1141 (LPYM). The Proton acceptor role is filled by Asp1185. Arg1189 contacts ATP. A phosphotyrosine; by autocatalysis mark is found at Tyr1215, Tyr1216, Tyr1330, and Tyr1337. A disordered region spans residues 1347-1378 (DGSVPPEQVQPSPQHCRSTSKPRPLSEPPLPT). Positions 1349 to 1360 (SVPPEQVQPSPQ) are enriched in low complexity.

It belongs to the protein kinase superfamily. Tyr protein kinase family. Heterodimer of an alpha chain and a beta chain which are disulfide linked. Binds PLXNB1. Associates with and is negatively regulated by HYAL2. Interacts when phosphorylated with downstream effectors including PIK3R1, PCLG1, GRB2 and GAB1. Interacts with integrin beta1/ITGB1 in a ligand-independent fashion. Isoform sf-Stk forms covalent heterodimers with friend spleen focus-forming virus (FSFFV) gp55. In terms of processing, proteolytic processing yields the two subunits. Post-translationally, autophosphorylated in response to ligand binding on Tyr-1215 and Tyr-1216 in the kinase domain leading to further phosphorylation of Tyr-1330 and Tyr-1337 in the C-terminal multifunctional docking site. Ubiquitinated. Ubiquitination by CBL regulates the receptor stability and activity through proteasomal degradation. In terms of processing, O-mannosylation of IPT/TIG domains on Thr or Ser residues by TMEM260 is required for protein maturation. O-mannosylated residues are composed of single mannose glycans that are not elongated or modified. As to expression, expressed in liver, skin, lung, brain, testis and kidney.

The protein localises to the membrane. The catalysed reaction is L-tyrosyl-[protein] + ATP = O-phospho-L-tyrosyl-[protein] + ADP + H(+). In its inactive state, the C-terminal tail interacts with the catalytic domain and inhibits the kinase activity. Upon ligand binding, the C-terminal tail is displaced and becomes phosphorylated, thus increasing the kinase activity. In terms of biological role, receptor tyrosine kinase that transduces signals from the extracellular matrix into the cytoplasm by binding to MST1 ligand. Regulates many physiological processes including cell survival, migration and differentiation. Ligand binding at the cell surface induces autophosphorylation of RON on its intracellular domain that provides docking sites for downstream signaling molecules. Following activation by ligand, interacts with the PI3-kinase subunit PIK3R1, PLCG1 or the adapter GAB1. Recruitment of these downstream effectors by RON leads to the activation of several signaling cascades including the RAS-ERK, PI3 kinase-AKT, or PLCgamma-PKC. RON signaling activates the wound healing response by promoting epithelial cell migration, proliferation as well as survival at the wound site. Also plays a role in the innate immune response by regulating the migration and phagocytic activity of macrophages. Alternatively, RON can also promote signals such as cell migration and proliferation in response to growth factors other than MST1 ligand. This Mus musculus (Mouse) protein is Macrophage-stimulating protein receptor (Mst1r).